The chain runs to 636 residues: Probable potassium transport system protein Kup (636 aa).

A run of 12 helical transmembrane segments spans residues 22 to 42 (MGLLVAAVGVVYGDIGTSPLY), 64 to 84 (ILSLILWSLLWVVSFKYVMFI), 114 to 134 (ALMVGCGLVGASLFYGDSMIT), 150 to 170 (FEGIDHWVVPISLVVLVALFL), 182 to 202 (LFGPIMVTWFVVLGALGVHGI), 220 to 240 (FFIVHPGMGVAILGAVVLALT), 261 to 281 (WFALVLPALVLNYFGQGAILL), 293 to 313 (LLAPGWALLPLVGLATMATVI), 351 to 371 (IYIGAVNWTLMVGVVLLVIGF), 383 to 403 (VAVTGTMLMTTILVSAVMLLL), 408 to 428 (PVLAVPLLVGFLLVDGLFFAA), and 433 to 453 (IVQGGAFPVLAGIVLFVLMST).

This sequence belongs to the HAK/KUP transporter (TC 2.A.72) family.

The protein resides in the cell inner membrane. It catalyses the reaction K(+)(in) + H(+)(in) = K(+)(out) + H(+)(out). In terms of biological role, transport of potassium into the cell. Likely operates as a K(+):H(+) symporter. The polypeptide is Probable potassium transport system protein Kup (Pseudomonas entomophila (strain L48)).